The chain runs to 46 residues: Protein PsbN (46 aa).

The chain crosses the membrane as a helical span at residues Ile10–Phe30.

The protein belongs to the PsbN family.

Its subcellular location is the cellular thylakoid membrane. May play a role in photosystem I and II biogenesis. The polypeptide is Protein PsbN (Prochlorococcus marinus (strain SARG / CCMP1375 / SS120)).